Here is a 492-residue protein sequence, read N- to C-terminus: Sestrin-1 (492 aa).

The N-terminal domain; may mediate the alkylhydroperoxide reductase activity stretch occupies residues 71–252 (FADSFAALGR…ICDITNGNHS (182 aa)). The active-site Cysteine sulfenic acid (-SOH) intermediate is Cys130. Phosphoserine is present on residues Ser293 and Ser314. Residues 321–492 (PARDVSRHFE…ALRAITRYMT (172 aa)) are C-terminal domain; mediates TORC1 regulation. Residues 386–389 (TYNT), Thr398, and Glu463 each bind L-leucine.

Belongs to the sestrin family. Interacts with the GATOR2 complex which is composed of MIOS, SEC13, SEH1L, WDR24 and WDR59; the interaction is negatively regulated by leucine. Interacts with RRAGA, RRAGB, RRAGC and RRAGD; may function as a guanine nucleotide dissociation inhibitor for RRAGs and regulate them. Interacts with KEAP1, RBX1 and SQSTM1; in the SQSTM1-dependent autophagic degradation of KEAP1. May interact with PRDX1. In terms of tissue distribution, highly expressed in heart and also detected in liver and skeletal muscles (at protein level).

The protein resides in the nucleus. It is found in the cytoplasm. The enzyme catalyses a hydroperoxide + L-cysteinyl-[protein] = S-hydroxy-L-cysteinyl-[protein] + an alcohol. Functions as an intracellular leucine sensor that negatively regulates the TORC1 signaling pathway through the GATOR complex. In absence of leucine, binds the GATOR subcomplex GATOR2 and prevents TORC1 signaling. Binding of leucine to SESN2 disrupts its interaction with GATOR2 thereby activating the TORC1 signaling pathway. This stress-inducible metabolic regulator may also play a role in protection against oxidative and genotoxic stresses. May positively regulate the transcription by NFE2L2 of genes involved in the response to oxidative stress by facilitating the SQSTM1-mediated autophagic degradation of KEAP1. Moreover, may prevent the accumulation of reactive oxygen species (ROS) through the alkylhydroperoxide reductase activity born by the N-terminal domain of the protein. Was originally reported to contribute to oxidative stress resistance by reducing PRDX1. However, this could not be confirmed. In Mus musculus (Mouse), this protein is Sestrin-1.